The following is a 164-amino-acid chain: Disulfide bond formation protein B (164 aa).

The Cytoplasmic portion of the chain corresponds to 1–4 (MRII). The helical transmembrane segment at 5–21 (FLLIALICAGLVSYALY) threads the bilayer. Topologically, residues 22–39 (LQLADGLLPCPLCIFQRM) are periplasmic. An intrachain disulfide couples C31 to C34. The chain crosses the membrane as a helical span at residues 40–56 (AYWLVGITALFAFIHHP). Residues 57–62 (QRLGRR) are Cytoplasmic-facing. A helical transmembrane segment spans residues 63–80 (IYCGLIILFSLAGAIVAG). The Periplasmic portion of the chain corresponds to 81-136 (RQAWLVRFPEAFECGISPEEAFLNELPLARWWPDMFEANGDCTDGTWQFLSLTIPD). C94 and C122 form a disulfide bridge. Residues 137–155 (WSLLIFLAFSLIAGLLWRS) form a helical membrane-spanning segment. The Cytoplasmic segment spans residues 156–164 (RSISSSNLK).

Belongs to the DsbB family.

The protein localises to the cell inner membrane. Its function is as follows. Required for disulfide bond formation in some periplasmic proteins. Acts by oxidizing the DsbA protein. The polypeptide is Disulfide bond formation protein B (Nitrosomonas europaea (strain ATCC 19718 / CIP 103999 / KCTC 2705 / NBRC 14298)).